A 310-amino-acid chain; its full sequence is MKITTKVLIIGSGPAGLSAAIYAARASLNPILINGIQPGGQLTITTDVENYPGFAESVQGPWLMEQMRMQAENVGTKIVNDYVEKVDLSQRPFKVSTGSRTEYEAESIIICTGAEARWLGIPTEQEFMGFGVSACATCDGFFFKNQKVVVVGGGNSAVEEALYLTNHASKVTIVHRRDNFRAEKILQERLFKNPKISVIWDHVVEEIVGNNNPKSVTGVKIQNVHTKETSLVNCSGVFVAIGHKPNTALFAEQVTMDNDNYIITTPGSTKTNIEGVFAAGDVQDKIYRQAITAAGTGCMAALEAEKFLNK.

FAD is bound at residue 34-41; that stretch reads NGIQPGGQ. Residues Cys-135 and Cys-138 are joined by a disulfide bond. 281–290 is an FAD binding site; sequence DVQDKIYRQA.

This sequence belongs to the class-II pyridine nucleotide-disulfide oxidoreductase family. In terms of assembly, homodimer. It depends on FAD as a cofactor.

Its subcellular location is the cytoplasm. The enzyme catalyses [thioredoxin]-dithiol + NADP(+) = [thioredoxin]-disulfide + NADPH + H(+). The chain is Thioredoxin reductase (trxB) from Rickettsia bellii (strain RML369-C).